The primary structure comprises 137 residues: Small ribosomal subunit protein uS9c (137 aa).

This sequence belongs to the universal ribosomal protein uS9 family.

The protein localises to the plastid. It localises to the chloroplast. This chain is Small ribosomal subunit protein uS9c (rps9), found in Gracilaria tenuistipitata var. liui (Red alga).